The following is a 308-amino-acid chain: Aspartate carbamoyltransferase catalytic subunit (308 aa).

R55 and T56 together coordinate carbamoyl phosphate. K83 contributes to the L-aspartate binding site. Carbamoyl phosphate-binding residues include R105, H133, and Q136. Positions 166 and 223 each coordinate L-aspartate. G264 and P265 together coordinate carbamoyl phosphate.

It belongs to the aspartate/ornithine carbamoyltransferase superfamily. ATCase family. As to quaternary structure, heterododecamer (2C3:3R2) of six catalytic PyrB chains organized as two trimers (C3), and six regulatory PyrI chains organized as three dimers (R2).

The enzyme catalyses carbamoyl phosphate + L-aspartate = N-carbamoyl-L-aspartate + phosphate + H(+). Its pathway is pyrimidine metabolism; UMP biosynthesis via de novo pathway; (S)-dihydroorotate from bicarbonate: step 2/3. Catalyzes the condensation of carbamoyl phosphate and aspartate to form carbamoyl aspartate and inorganic phosphate, the committed step in the de novo pyrimidine nucleotide biosynthesis pathway. This Salinispora arenicola (strain CNS-205) protein is Aspartate carbamoyltransferase catalytic subunit.